Reading from the N-terminus, the 718-residue chain is Receptor-like protein 36 (718 aa).

The signal sequence occupies residues 1 to 26; the sequence is MIRSLSYCFLTIYFFLSILPLPNTIA. The Extracellular segment spans residues 27–695; that stretch reads CPTRLLCRSD…SESEDQLLNW (669 aa). LRR repeat units follow at residues 70–94, 95–118, 120–141, 143–165, 166–188, 189–213, 214–238, 239–261, 262–286, 288–310, 312–334, 335–359, 360–383, 384–406, 407–431, 433–454, 455–480, and 481–505; these read DAIL…IGNL, SHLT…IGNL, QLES…SFAN, TKLS…LANL, TSLS…DLSG, LHNL…LLMI, PSLV…TFSL, SRLR…SISK, LVNL…ISKV, NLTS…VWRS, KLDY…EVID, GASL…ICKV, KDLY…LKYS, TYFH…LFIK, DSQL…LINC, RIEF…WLGS, LPYL…AYLG, and FPSI…YFAN. Asn-93 carries N-linked (GlcNAc...) asparagine glycosylation. Asn-141 and Asn-164 each carry an N-linked (GlcNAc...) asparagine glycan. An N-linked (GlcNAc...) asparagine glycan is attached at Asn-199. Residue Asn-288 is glycosylated (N-linked (GlcNAc...) asparagine). Asn-373 and Asn-393 each carry an N-linked (GlcNAc...) asparagine glycan. A glycan (N-linked (GlcNAc...) asparagine) is linked at Asn-528. LRR repeat units lie at residues 550 to 574, 575 to 598, 599 to 622, and 624 to 647; these read FEGF…IGLL, SELR…LANI, TNLE…LGKL, and FLSN…QFAT. Residues Asn-581, Asn-597, Asn-610, Asn-629, and Asn-649 are each glycosylated (N-linked (GlcNAc...) asparagine). The chain crosses the membrane as a helical span at residues 696 to 716; it reads IAAAIAFGPGMFCGLVIGHIF. Over 717–718 the chain is Cytoplasmic; sequence TS.

Belongs to the RLP family.

Its subcellular location is the cell membrane. In Arabidopsis thaliana (Mouse-ear cress), this protein is Receptor-like protein 36.